We begin with the raw amino-acid sequence, 235 residues long: Ribitol-5-phosphate cytidylyltransferase (235 aa).

CTP contacts are provided by residues 7 to 10, 82 to 88, and Ser-113; these read LAGG and GADRNTS.

Belongs to the IspD/TarI cytidylyltransferase family. TarI subfamily.

The catalysed reaction is D-ribitol 5-phosphate + CTP + H(+) = CDP-L-ribitol + diphosphate. It participates in cell wall biogenesis; poly(ribitol phosphate) teichoic acid biosynthesis. Its function is as follows. Catalyzes the transfer of the cytidylyl group of CTP to D-ribitol 5-phosphate. The polypeptide is Ribitol-5-phosphate cytidylyltransferase (Streptococcus pneumoniae serotype 2 (strain D39 / NCTC 7466)).